We begin with the raw amino-acid sequence, 372 residues long: N-methyl-L-tryptophan oxidase (372 aa).

4 to 34 contacts FAD; that stretch reads DLIIIGSGSVGAAAGYYATRAGLKVLMTDAH. S-8alpha-FAD cysteine is present on cysteine 307.

Belongs to the MSOX/MTOX family. MTOX subfamily. In terms of assembly, monomer. Requires FAD as cofactor.

It catalyses the reaction N(alpha)-methyl-L-tryptophan + O2 + H2O = L-tryptophan + formaldehyde + H2O2. In terms of biological role, catalyzes the oxidative demethylation of N-methyl-L-tryptophan. The polypeptide is N-methyl-L-tryptophan oxidase (Salmonella arizonae (strain ATCC BAA-731 / CDC346-86 / RSK2980)).